Reading from the N-terminus, the 72-residue chain is Gas vesicle protein A (72 aa).

It belongs to the gas vesicle GvpA family. As to quaternary structure, the gas vesicle shell is 2 nm thick and consists of a single layer of this protein. It forms helical ribs nearly perpendicular to the long axis of the vesicle.

It localises to the gas vesicle shell. In terms of biological role, gas vesicles are hollow, gas filled proteinaceous nanostructures found in some microorganisms. During planktonic growth they allow positioning of the organism at a favorable depth for light or nutrient acquisition. GvpA forms the protein shell. The sequence is that of Gas vesicle protein A from Geotalea uraniireducens (strain Rf4) (Geobacter uraniireducens).